We begin with the raw amino-acid sequence, 635 residues long: Chaperone protein HtpG (635 aa).

Residues 1-336 (MTTAEAAAPE…SADLPLNLSR (336 aa)) form an a; substrate-binding region. The b stretch occupies residues 337-556 (EMLQDSAILA…ESGIDRRLEK (220 aa)). The c stretch occupies residues 557–635 (LLASAGRLGD…RVMQRGLPTA (79 aa)).

Belongs to the heat shock protein 90 family. Homodimer.

The protein localises to the cytoplasm. Its function is as follows. Molecular chaperone. Has ATPase activity. This is Chaperone protein HtpG from Azorhizobium caulinodans (strain ATCC 43989 / DSM 5975 / JCM 20966 / LMG 6465 / NBRC 14845 / NCIMB 13405 / ORS 571).